The sequence spans 72 residues: uncharacterized protein (72 aa).

This sequence belongs to the phage portal family. HK97 subfamily.

This is an uncharacterized protein from Rickettsia conorii (strain ATCC VR-613 / Malish 7).